A 233-amino-acid polypeptide reads, in one-letter code: Large ribosomal subunit protein uL1 (233 aa).

This sequence belongs to the universal ribosomal protein uL1 family. Part of the 50S ribosomal subunit.

In terms of biological role, binds directly to 23S rRNA. The L1 stalk is quite mobile in the ribosome, and is involved in E site tRNA release. Protein L1 is also a translational repressor protein, it controls the translation of the L11 operon by binding to its mRNA. This is Large ribosomal subunit protein uL1 from Thermotoga sp. (strain RQ2).